The sequence spans 350 residues: Probable nicotinate-nucleotide adenylyltransferase/Ap4A hydrolase (350 aa).

The naMN adenylyltransferase stretch occupies residues 1-187 (MKQKIIIFGG…YINTNHLYLI (187 aa)). Residues 196–350 (DKRFQHCLRV…LKYVQNLVKD (155 aa)) are ap4A hydrolase. An HD domain is found at 198–310 (RFQHCLRVGK…VYLADKLEPN (113 aa)). An ADP-binding site is contributed by His201. Fe cation is bound by residues His201, His230, and Asp231. Residues 231-234 (DLAK), His261, 287-288 (HT), Asp305, and Arg311 each bind ADP. Fe cation is bound at residue Asp305.

In the N-terminal section; belongs to the NadD family. It in the C-terminal section; belongs to the Ap4A hydrolase YqeK family.

It catalyses the reaction nicotinate beta-D-ribonucleotide + ATP + H(+) = deamido-NAD(+) + diphosphate. It carries out the reaction P(1),P(4)-bis(5'-adenosyl) tetraphosphate + H2O = 2 ADP + 2 H(+). Its pathway is cofactor biosynthesis; NAD(+) biosynthesis; deamido-NAD(+) from nicotinate D-ribonucleotide: step 1/1. In terms of biological role, catalyzes the reversible adenylation of nicotinate mononucleotide (NaMN) to nicotinic acid adenine dinucleotide (NaAD). Hydrolyzes diadenosine 5',5'''-P1,P4-tetraphosphate (Ap4A) to yield ADP. This chain is Probable nicotinate-nucleotide adenylyltransferase/Ap4A hydrolase, found in Mycoplasma genitalium (strain ATCC 33530 / DSM 19775 / NCTC 10195 / G37) (Mycoplasmoides genitalium).